The sequence spans 674 residues: Glutaminase kidney isoform, mitochondrial (674 aa).

The transit peptide at 1–54 (MMRLRGSAMLRELLLRPPAAVGGVLRRTQPLGTLCRRPRGGSRPAAGLVAAARL) directs the protein to the mitochondrion. The interval 56-123 (PWWGGGGRAK…PGETDAFGNS (68 aa)) is disordered. Residues 58–71 (WGGGGRAKGPGSGG) are compositionally biased toward gly residues. Residues 89–101 (PPQQQQQQQQQPG) show a composition bias toward low complexity. Lysine 135 and lysine 169 each carry N6-succinyllysine. Serine 291 serves as a coordination point for substrate. An N6-acetyllysine modification is found at lysine 316. The interval 320–327 (GLRFNKLF) is highly mobile activation loop. Substrate is bound by residues asparagine 340, glutamate 386, asparagine 393, tyrosine 419, tyrosine 471, and valine 489. 2 ANK repeats span residues 590–619 (DSRTALHVAAAEGHVEVVKFLLEACKVNPF) and 624–653 (WNNTPMDEALHFGHHDVFKILQEYQVQYTP). The interval 652–674 (TPQGDSDDGKENQTVHKNLDGLL) is disordered. Position 657 is a phosphoserine (serine 657). Basic and acidic residues predominate over residues 658–674 (DDGKENQTVHKNLDGLL).

Belongs to the glutaminase family. As to quaternary structure, homotetramer, dimer of dimers. Tetramer composed of 68 and 65 kDa peptides in a 1:3 ratio. Can assemble into higher oligomers (in vitro), but the physiological significance of this is not clear. Interacts with RAF1 and MAP2K2. Interacts with ATCAY; the interaction is direct and may control GLS localization, negatively regulating its activity. Post-translationally, synthesized as a 74-kDa cytosolic precursor which is proteolytically processed by the mitochondrial-processing peptidase (MPP) via a 72-kDa intermediate to yield the mature mitochondrial 68- and 65-kDa subunits. In terms of tissue distribution, kidney, brain, and intestine.

It is found in the mitochondrion. Its subcellular location is the cytoplasm. It localises to the cytosol. The protein localises to the mitochondrion matrix. The catalysed reaction is L-glutamine + H2O = L-glutamate + NH4(+). Enzyme activity is increased by phosphate, due to increased kcat and increased substrate affinity. Its function is as follows. Catalyzes the first reaction in the primary pathway for the renal catabolism of glutamine. Plays a role in maintaining acid-base homeostasis. Regulates the levels of the neurotransmitter glutamate, the main excitatory neurotransmitter in the brain. The chain is Glutaminase kidney isoform, mitochondrial (Gls) from Rattus norvegicus (Rat).